A 257-amino-acid polypeptide reads, in one-letter code: E3 ubiquitin-protein ligase RNF170 (257 aa).

Over 1–24 the chain is Lumenal; sequence MADNQEERPHFPLDEGSIIEGVSD. The helical transmembrane segment at 25–45 threads the bilayer; the sequence is QVIVVVLLSFVAVGSLIYLLL. The Cytoplasmic segment spans residues 46–200; that stretch reads RNDEQNIHPE…GGLFWMFRIR (155 aa). An RING-type zinc finger spans residues 87–130; it reads CPVCLQQATFPVETNCGHLFCGSCIIAYWRYGTWLGAINCPICR. The helical transmembrane segment at 201–221 threads the bilayer; sequence IVLCLLGALLYLVSPLDIIPE. A topological domain (lumenal) is located at residue A222. Residues 223 to 243 traverse the membrane as a helical segment; sequence LFGILGFLDDLFVLFLLLIYI. Topologically, residues 244–257 are cytoplasmic; the sequence is SIMYREVVTQRLYR.

The protein localises to the endoplasmic reticulum membrane. It catalyses the reaction S-ubiquitinyl-[E2 ubiquitin-conjugating enzyme]-L-cysteine + [acceptor protein]-L-lysine = [E2 ubiquitin-conjugating enzyme]-L-cysteine + N(6)-ubiquitinyl-[acceptor protein]-L-lysine.. It functions in the pathway protein modification; protein ubiquitination. Functionally, E3 ubiquitin-protein ligase that plays an essential role in stimulus-induced inositol 1,4,5-trisphosphate receptor (ITPR) ubiquitination and degradation via the endoplasmic reticulum-associated degradation (ERAD) pathway. Also involved in ITPR turnover in resting cells. The polypeptide is E3 ubiquitin-protein ligase RNF170 (rnf170) (Xenopus laevis (African clawed frog)).